The chain runs to 274 residues: MSNLQTIIEDAFERRAEITPSTASAEIKDAVFSVLADLDSGKLRVAERTDGQNWVTHQWIKKAVLLSFRLEDNVLLDDGVTKYFDKVPPKFANYTEADFKAGGFRVVPNAIVRRGSFIAKNAVLMPSYVNIGAYVGEGTMVDTWATVGSCAQIGKNVHLSGGVGIGGVLEPVQAGPTIIGDNCFIGARSEVVEGVIVEDNCVISMGVYIGQSTKIYDRETGEIHYGRVPTGSVVVSGNLPSKDGSYSLYCAVIVKKVDEKTLGKVGINELLRGI.

Residues Arg105 and Asp142 each coordinate substrate.

It belongs to the transferase hexapeptide repeat family. Homotrimer.

Its subcellular location is the cytoplasm. The catalysed reaction is (S)-2,3,4,5-tetrahydrodipicolinate + succinyl-CoA + H2O = (S)-2-succinylamino-6-oxoheptanedioate + CoA. It participates in amino-acid biosynthesis; L-lysine biosynthesis via DAP pathway; LL-2,6-diaminopimelate from (S)-tetrahydrodipicolinate (succinylase route): step 1/3. The protein is 2,3,4,5-tetrahydropyridine-2,6-dicarboxylate N-succinyltransferase of Methylobacillus flagellatus (strain ATCC 51484 / DSM 6875 / VKM B-1610 / KT).